The following is a 126-amino-acid chain: Small ribosomal subunit protein uS13 (126 aa).

Residues 99 to 126 (LRGQSTKNNARTRKGKKKTVANKKKATK) are disordered. Residues 108–126 (ARTRKGKKKTVANKKKATK) are compositionally biased toward basic residues.

The protein belongs to the universal ribosomal protein uS13 family. Part of the 30S ribosomal subunit. Forms a loose heterodimer with protein S19. Forms two bridges to the 50S subunit in the 70S ribosome.

In terms of biological role, located at the top of the head of the 30S subunit, it contacts several helices of the 16S rRNA. In the 70S ribosome it contacts the 23S rRNA (bridge B1a) and protein L5 of the 50S subunit (bridge B1b), connecting the 2 subunits; these bridges are implicated in subunit movement. Contacts the tRNAs in the A and P-sites. The chain is Small ribosomal subunit protein uS13 from Porphyromonas gingivalis (strain ATCC 33277 / DSM 20709 / CIP 103683 / JCM 12257 / NCTC 11834 / 2561).